The following is a 448-amino-acid chain: Probable xyloglucan 6-xylosyltransferase 1 (448 aa).

Topologically, residues 1-19 (MWVAERVVGERRMREIQRF) are cytoplasmic. Residues 20–42 (ARNAKLTVVCLLLTVVVLRGTVG) form a helical; Signal-anchor for type II membrane protein membrane-spanning segment. At 43–448 (AGKFGTPQQD…AFKAMKTTST (406 aa)) the chain is on the lumenal side. Positions 71–113 (HHDALSRGGGSSSSSGRAAQRDDEPDPPPRTLRDPPYTLGPKI) are disordered. Asn421 is a glycosylation site (N-linked (GlcNAc...) asparagine).

It belongs to the glycosyltransferase 34 family.

The protein resides in the golgi apparatus membrane. It carries out the reaction Transfers an alpha-D-xylosyl residue from UDP-D-xylose to a glucose residue in xyloglucan, forming an alpha-(1-&gt;6)-D-xylosyl-D-glucose linkage.. In terms of biological role, probable xyloglucan xylosyltransferase involved in the biosynthesis of xyloglucan in roots. The protein is Probable xyloglucan 6-xylosyltransferase 1 of Oryza sativa subsp. indica (Rice).